The following is a 385-amino-acid chain: Mannitol-1-phosphate 5-dehydrogenase (385 aa).

3 to 14 (AVHFGAGNIGRG) is an NAD(+) binding site.

Belongs to the mannitol dehydrogenase family.

It carries out the reaction D-mannitol 1-phosphate + NAD(+) = beta-D-fructose 6-phosphate + NADH + H(+). The chain is Mannitol-1-phosphate 5-dehydrogenase from Geobacillus thermodenitrificans (strain NG80-2).